Reading from the N-terminus, the 66-residue chain is EEVRDAYIAQPHNCVYHCFRDSYCNDLCIKHGAESGECKWFTSSGNACWCVKLPKSEPIKVPGKCH.

An LCN-type CS-alpha/beta domain is found at 4–66 (RDAYIAQPHN…EPIKVPGKCH (63 aa)). Disulfide bonds link Cys-14–Cys-65, Cys-18–Cys-38, Cys-24–Cys-48, and Cys-28–Cys-50.

The protein belongs to the long (4 C-C) scorpion toxin superfamily. Sodium channel inhibitor family. Alpha subfamily. As to expression, expressed by the venom gland.

The protein resides in the secreted. Functionally, this recombinant toxin slows fast inactivation on Nav1.1/SCN1A (EC(50)=17 nM), Nav1.4/SN4A (EC(50)=7.5 nM), Nav1.5/SCN5A (EC(50)=9.2 nM) and Nav1.6/SCN8A (EC(50)=37.3 nM) voltage-gated sodium channels. On Nav1.1/SCN1A channel, it acts as an agonist by inducing a shift in both the voltage dependence of channel inactivation (alpha-toxin activity) and activation (beta-toxin activity). In vivo, shows moderate insecticidal activities. It induces irreversible paralysis in blowflies and lethal effects in D.melanogaster. This chain is Delta-buthitoxin-Hj1a, found in Hottentotta judaicus (Black scorpion).